An 884-amino-acid chain; its full sequence is Bifunctional heparan sulfate N-deacetylase/N-sulfotransferase 2 (884 aa).

Residues 1-18 (MLKLWKVVRPARQLELHR) are Cytoplasmic-facing. The helical; Signal-anchor for type II membrane protein transmembrane segment at 19–39 (LILLLIAFSLGSMGFLAYYVS) threads the bilayer. Residues 40–884 (TSPKAKEPLP…REELQHSSSG (845 aa)) lie on the Lumenal side of the membrane. Residues 41 to 598 (SPKAKEPLPL…KRHKDIWSKE (558 aa)) form a heparan sulfate N-deacetylase 2 region. The disordered stretch occupies residues 49-82 (PLPLGDCSSSGAAGGPGPVRPPVPPRPPRPPETA). Residues 66-79 (PVRPPVPPRPPRPP) are compositionally biased toward pro residues. Asn351 and Asn401 each carry an N-linked (GlcNAc...) asparagine glycan. The segment at 599–884 (KTCDRLPKFL…REELQHSSSG (286 aa)) is heparan sulfate N-sulfotransferase 2. Catalysis depends on Lys614, which acts as the For sulfotransferase activity. 614–618 (KTGTT) serves as a coordination point for 3'-phosphoadenylyl sulfate. A glycan (N-linked (GlcNAc...) asparagine) is linked at Asn667. A 3'-phosphoadenylyl sulfate-binding site is contributed by Ser712. Asn727 and Asn803 each carry an N-linked (GlcNAc...) asparagine glycan. Cysteines 818 and 828 form a disulfide. Residue 833 to 837 (KGRKY) participates in 3'-phosphoadenylyl sulfate binding.

The protein belongs to the sulfotransferase 1 family. NDST subfamily. Monomer.

It is found in the golgi apparatus membrane. It carries out the reaction alpha-D-glucosaminyl-[heparan sulfate](n) + 3'-phosphoadenylyl sulfate = N-sulfo-alpha-D-glucosaminyl-[heparan sulfate](n) + adenosine 3',5'-bisphosphate + 2 H(+). It participates in glycan metabolism; heparan sulfate biosynthesis. It functions in the pathway glycan metabolism; heparin biosynthesis. Essential bifunctional enzyme that catalyzes both the N-deacetylation and the N-sulfation of glucosamine (GlcNAc) of the glycosaminoglycan in heparan sulfate. Modifies the GlcNAc-GlcA disaccharide repeating sugar backbone to make N-sulfated heparosan, a prerequisite substrate for later modifications in heparin biosynthesis. Plays a role in determining the extent and pattern of sulfation of heparan sulfate. Required for the exosomal release of SDCBP, CD63 and syndecan. In Bos taurus (Bovine), this protein is Bifunctional heparan sulfate N-deacetylase/N-sulfotransferase 2 (NDST2).